The sequence spans 210 residues: Chaperone protein TorD (210 aa).

The protein belongs to the TorD/DmsD family. TorD subfamily.

It localises to the cytoplasm. Functionally, involved in the biogenesis of TorA. Acts on TorA before the insertion of the molybdenum cofactor and, as a result, probably favors a conformation of the apoenzyme that is competent for acquiring the cofactor. In Salmonella paratyphi B (strain ATCC BAA-1250 / SPB7), this protein is Chaperone protein TorD.